A 216-amino-acid chain; its full sequence is Peptide methionine sulfoxide reductase MsrA (216 aa).

Cys-58 is an active-site residue.

It belongs to the MsrA Met sulfoxide reductase family.

The catalysed reaction is L-methionyl-[protein] + [thioredoxin]-disulfide + H2O = L-methionyl-(S)-S-oxide-[protein] + [thioredoxin]-dithiol. The enzyme catalyses [thioredoxin]-disulfide + L-methionine + H2O = L-methionine (S)-S-oxide + [thioredoxin]-dithiol. Its function is as follows. Has an important function as a repair enzyme for proteins that have been inactivated by oxidation. Catalyzes the reversible oxidation-reduction of methionine sulfoxide in proteins to methionine. This Azotobacter vinelandii (strain DJ / ATCC BAA-1303) protein is Peptide methionine sulfoxide reductase MsrA.